The following is a 343-amino-acid chain: GTPase Obg (343 aa).

The Obg domain maps to 1–158 (MFIDEAKIRV…FTLRLELKVL (158 aa)). The interval 121 to 140 (RGGRGNQHFATSTHQAPREH) is disordered. Positions 159-333 (ADIGIVGYPN…LKYAMAERVR (175 aa)) constitute an OBG-type G domain. Residues 165–172 (GYPNVGKS), 190–194 (FTTLE), 215–218 (DIPG), 286–289 (SKID), and 314–316 (SAV) contribute to the GTP site. Positions 172 and 192 each coordinate Mg(2+).

Belongs to the TRAFAC class OBG-HflX-like GTPase superfamily. OBG GTPase family. Monomer. Mg(2+) serves as cofactor.

The protein localises to the cytoplasm. Its function is as follows. An essential GTPase which binds GTP, GDP and possibly (p)ppGpp with moderate affinity, with high nucleotide exchange rates and a fairly low GTP hydrolysis rate. Plays a role in control of the cell cycle, stress response, ribosome biogenesis and in those bacteria that undergo differentiation, in morphogenesis control. This chain is GTPase Obg, found in Acidobacterium capsulatum (strain ATCC 51196 / DSM 11244 / BCRC 80197 / JCM 7670 / NBRC 15755 / NCIMB 13165 / 161).